We begin with the raw amino-acid sequence, 421 residues long: Ameloblastin (421 aa).

A signal peptide spans 1–26 (MPALKIPLFKMKDMVLILCLLKMSSA). At proline 37 the chain carries Hydroxyproline. Serine 43 carries the phosphoserine modification. 3 disordered regions span residues 104 to 126 (PVHP…QKPF), 264 to 311 (GGMP…ADPE), and 333 to 421 (GKIP…FQEP). Serine 112 carries O-linked (GalNAc...) serine glycosylation. The span at 113-125 (QPSLQPQQPGQKP) shows a compositional bias: low complexity. Positions 339 to 350 (ARGPAGRSRGPP) are enriched in low complexity. Over residues 388-410 (MDSTATPYSEHTSMPGNKAQQPQ) the composition is skewed to polar residues. The segment covering 411-421 (IKRDAWRFQEP) has biased composition (basic and acidic residues).

The protein belongs to the ameloblastin family. Ameloblast-specific. Located at the Tomes processes of secretory ameloblasts and in the sheath space between rod-interrod enamel.

It localises to the secreted. Its subcellular location is the extracellular space. The protein localises to the extracellular matrix. In terms of biological role, involved in the mineralization and structural organization of enamel. The polypeptide is Ameloblastin (AMBN) (Sus scrofa (Pig)).